Here is a 522-residue protein sequence, read N- to C-terminus: Transactivator/viroplasmin protein (522 aa).

Residues 487–500 are compositionally biased toward basic and acidic residues; the sequence is KDASTDRGTTDKDG. The interval 487-522 is disordered; that stretch reads KDASTDRGTTDKDGPPPTRSIVEKEDVPTTSSKQVD.

This sequence belongs to the caulimoviridae viroplasmin family.

The protein localises to the host cytoplasm. In terms of biological role, enhances the ribosomal termination-reinitiation event leading to the translation of major open reading frames on the polycistronic viral RNAs. The chain is Transactivator/viroplasmin protein from Arabidopsis thaliana (Mouse-ear cress).